The chain runs to 486 residues: Glutamyl-tRNA(Gln) amidotransferase subunit A (486 aa).

Residues K74 and S149 each act as charge relay system in the active site. S173 acts as the Acyl-ester intermediate in catalysis.

It belongs to the amidase family. GatA subfamily. Heterotrimer of A, B and C subunits.

It catalyses the reaction L-glutamyl-tRNA(Gln) + L-glutamine + ATP + H2O = L-glutaminyl-tRNA(Gln) + L-glutamate + ADP + phosphate + H(+). Allows the formation of correctly charged Gln-tRNA(Gln) through the transamidation of misacylated Glu-tRNA(Gln) in organisms which lack glutaminyl-tRNA synthetase. The reaction takes place in the presence of glutamine and ATP through an activated gamma-phospho-Glu-tRNA(Gln). This is Glutamyl-tRNA(Gln) amidotransferase subunit A from Prochlorococcus marinus (strain NATL2A).